Reading from the N-terminus, the 227-residue chain is E3 ubiquitin-protein ligase ZNRF1 (227 aa).

A disordered region spans residues Met1–Arg38. A lipid anchor (N-myristoyl glycine) is attached at Gly2. Residues Gly2–Arg10 are required for endosomal and lysosomal localization and myristoylation. Ser50, Ser52, and Ser53 each carry phosphoserine. Residues Arg77–Glu105 form a disordered region. Phosphotyrosine is present on Tyr103. Ser123 is subject to Phosphoserine. The RING-type; atypical zinc finger occupies Cys184–Pro225.

In terms of assembly, interacts with AKT1, GLUL and TUBB2A. Interacts with ZNRF2. Interacts (via its RING domain) with UBE2N. Interacts (when phosphorylated) with YWHAE. N-myristoylation targets ZNRF1 to intracellular membranes. In terms of processing, phosphorylated by SRC at Tyr-103; leading to 'Lys-63'-linked ubiquitination of TLR3, lysosomal trafficking and degradation.

The protein resides in the endosome. Its subcellular location is the lysosome. It is found in the membrane. The protein localises to the cytoplasmic vesicle. It localises to the secretory vesicle. The protein resides in the synaptic vesicle membrane. It carries out the reaction S-ubiquitinyl-[E2 ubiquitin-conjugating enzyme]-L-cysteine + [acceptor protein]-L-lysine = [E2 ubiquitin-conjugating enzyme]-L-cysteine + N(6)-ubiquitinyl-[acceptor protein]-L-lysine.. Its pathway is protein modification; protein ubiquitination. Its function is as follows. E3 ubiquitin-protein ligase that plays a role in different processes including cell differentiation, receptor recycling or regulation of inflammation. Mediates the ubiquitination of AKT1 and GLUL, thereby playing a role in neuron cells differentiation. Plays a role in the establishment and maintenance of neuronal transmission and plasticity. Regulates Schwann cells differentiation by mediating ubiquitination of GLUL. Promotes neurodegeneration by mediating 'Lys-48'-linked polyubiquitination and subsequent degradation of AKT1 in axons: degradation of AKT1 prevents AKT1-mediated phosphorylation of GSK3B, leading to GSK3B activation and phosphorylation of DPYSL2/CRMP2 followed by destabilization of microtubule assembly in axons. Ubiquitinates the Na(+)/K(+) ATPase alpha-1 subunit/ATP1A1 and thereby influences its endocytosis and/or degradation. Controls ligand-induced EGFR signaling via mediating receptor ubiquitination and recruitment of the ESCRT machinery. Acts as a negative feedback mechanism controlling TLR3 trafficking by mediating TLR3 'Lys-63'-linked polyubiquitination to reduce type I IFN production. Modulates inflammation by promoting caveolin-1/CAV1 ubiquitination and degradation to regulate TLR4-activated immune response. The polypeptide is E3 ubiquitin-protein ligase ZNRF1 (ZNRF1) (Bos taurus (Bovine)).